The chain runs to 522 residues: Maturase K (522 aa).

This sequence belongs to the intron maturase 2 family. MatK subfamily.

The protein localises to the plastid. Its subcellular location is the chloroplast. Functionally, usually encoded in the trnK tRNA gene intron. Probably assists in splicing its own and other chloroplast group II introns. In Iris danfordiae (Danford iris), this protein is Maturase K.